A 510-amino-acid polypeptide reads, in one-letter code: GPI mannosyltransferase 3 (510 aa).

7 consecutive transmembrane segments (helical) span residues 17–37 (TVLV…KTFF), 96–116 (IAPK…TWKL), 123–143 (PAEA…WFFL), 145–163 (RTFS…LNYW), 179–199 (LFIG…WAVL), 221–241 (VALV…EPVF), and 269–289 (YEAL…GLWI). N290 carries an N-linked (GlcNAc...) asparagine glycan. The next 2 helical transmembrane spans lie at 316 to 336 (FIYP…TQTP) and 342 to 362 (WLVW…SQVH).

Belongs to the glycosyltransferase 22 family. PIGB subfamily.

It is found in the endoplasmic reticulum membrane. It functions in the pathway glycolipid biosynthesis; glycosylphosphatidylinositol-anchor biosynthesis. Functionally, mannosyltransferase involved in glycosylphosphatidylinositol-anchor biosynthesis. Transfers the third mannose to Man2-GlcN-acyl-PI during GPI precursor assembly. In Yarrowia lipolytica (strain CLIB 122 / E 150) (Yeast), this protein is GPI mannosyltransferase 3 (GPI10).